The chain runs to 250 residues: Acetylglutamate kinase (250 aa).

Residues 41–42, R63, and N156 contribute to the substrate site; that span reads GG.

The protein belongs to the acetylglutamate kinase family. ArgB subfamily.

The protein resides in the cytoplasm. The enzyme catalyses N-acetyl-L-glutamate + ATP = N-acetyl-L-glutamyl 5-phosphate + ADP. The protein operates within amino-acid biosynthesis; L-arginine biosynthesis; N(2)-acetyl-L-ornithine from L-glutamate: step 2/4. Catalyzes the ATP-dependent phosphorylation of N-acetyl-L-glutamate. In Listeria monocytogenes serotype 4b (strain CLIP80459), this protein is Acetylglutamate kinase.